The primary structure comprises 398 residues: Meiosis-specific protein SPO11 (398 aa).

Residues 40–175 (CSNADVLAHI…LNIIPAQKGL (136 aa)) form the Topo IIA-type catalytic domain. The active-site O-(5'-phospho-DNA)-tyrosine intermediate is Tyr-135. Residues Glu-233 and Asp-288 each contribute to the Mg(2+) site.

It belongs to the TOP6A family. Requires Mg(2+) as cofactor.

It localises to the nucleus. It is found in the chromosome. The enzyme catalyses ATP-dependent breakage, passage and rejoining of double-stranded DNA.. Functionally, required for meiotic recombination. Mediates DNA cleavage that forms the double-strand breaks (DSB) that initiate meiotic recombination. The action of SPO11 is important in setting off a regulatory chain of events encompassing 5' to 3' resection. When there are no SPO11-DSBs, resection of a site specific VDE-DSB takes place but it is faster than in wild-type meiosis and increases the risk of uncovering flanking homology. The chain is Meiosis-specific protein SPO11 (SPO11) from Saccharomyces cerevisiae (strain ATCC 204508 / S288c) (Baker's yeast).